We begin with the raw amino-acid sequence, 416 residues long: Glutamyl-tRNA reductase (416 aa).

Substrate-binding positions include 49–52 (TCNR), Ser105, 110–112 (EPQ), and Gln116. Cys50 (nucleophile) is an active-site residue. NADP(+) is bound at residue 185-190 (GAGETI).

This sequence belongs to the glutamyl-tRNA reductase family. Homodimer.

The catalysed reaction is (S)-4-amino-5-oxopentanoate + tRNA(Glu) + NADP(+) = L-glutamyl-tRNA(Glu) + NADPH + H(+). The protein operates within porphyrin-containing compound metabolism; protoporphyrin-IX biosynthesis; 5-aminolevulinate from L-glutamyl-tRNA(Glu): step 1/2. Its function is as follows. Catalyzes the NADPH-dependent reduction of glutamyl-tRNA(Glu) to glutamate 1-semialdehyde (GSA). This is Glutamyl-tRNA reductase from Shewanella loihica (strain ATCC BAA-1088 / PV-4).